The primary structure comprises 287 residues: Inorganic pyrophosphatase (287 aa).

A diphosphate-binding site is contributed by Arg79. Mg(2+) is bound by residues Asp116, Asp121, and Asp153.

The protein belongs to the PPase family. As to quaternary structure, homodimer. It depends on Mg(2+) as a cofactor.

It localises to the cytoplasm. The catalysed reaction is diphosphate + H2O = 2 phosphate + H(+). In Kluyveromyces lactis (strain ATCC 8585 / CBS 2359 / DSM 70799 / NBRC 1267 / NRRL Y-1140 / WM37) (Yeast), this protein is Inorganic pyrophosphatase (IPP1).